Here is a 464-residue protein sequence, read N- to C-terminus: MVLDDLGTSLRSSLDKLQGKSRLSESDVEEIVKEIQRSLLSADVDVSLVMELSDSIKTRALEEEPPGGTTAKDHVLKIVYEEMVELVGDSTELPLENQTILLAGLQGSGKTTSAAKMAWWFSKKGLRPAVIQTDTFRPGAYDQAKQMCERAEVDFYGDPDNDDPVAIAREGLEATADADVHIVDTAGRHALEDDLIAEIEEIERAVDPDRSLLVLDAAIGQGAKEQARQFEKSIGIEGVMITKLDGTAKGGGALTAVNETDSSIAFLGTGETVQDIERFEPSGFISRLLGMGDLKQLSERVERAMAEAQEEDEDWDPEDMLQGEFTLKDMKRQMDAMNRMGPLDQVMDMIPGMGGGMMDQLPDDAMDVTQDRMRRFERIMDSMTDEELEQPRVVGQSRTERIARGSGTDEETVRQLLEQHSMMEQTISQFQGMGEGDMQRMMKKMGGGEGGGLGDMMGGGKGPF.

GTP contacts are provided by residues 104 to 111, 184 to 188, and 242 to 245; these read GLQGSGKT, DTAGR, and TKLD.

The protein belongs to the GTP-binding SRP family. SRP54 subfamily. In terms of assembly, part of the signal recognition particle protein translocation system, which is composed of SRP and FtsY. Archaeal SRP consists of a 7S RNA molecule of 300 nucleotides and two protein subunits: SRP54 and SRP19.

It localises to the cytoplasm. It carries out the reaction GTP + H2O = GDP + phosphate + H(+). Involved in targeting and insertion of nascent membrane proteins into the cytoplasmic membrane. Binds to the hydrophobic signal sequence of the ribosome-nascent chain (RNC) as it emerges from the ribosomes. The SRP-RNC complex is then targeted to the cytoplasmic membrane where it interacts with the SRP receptor FtsY. The polypeptide is Signal recognition particle 54 kDa protein (Halorubrum lacusprofundi (strain ATCC 49239 / DSM 5036 / JCM 8891 / ACAM 34)).